We begin with the raw amino-acid sequence, 311 residues long: Peptide methionine sulfoxide reductase MsrA/MsrB 2 (311 aa).

Residues 1–155 (MHEIYLAGGC…PNGYCHINVN (155 aa)) are peptide methionine sulfoxide reductase A. Cys10 is an active-site residue. The 124-residue stretch at 172–295 (DEELKKTLSP…NSLSIRFIPK (124 aa)) folds into the MsrB domain. The active-site Nucleophile is Cys284.

It in the N-terminal section; belongs to the MsrA Met sulfoxide reductase family. The protein in the C-terminal section; belongs to the MsrB Met sulfoxide reductase family.

It catalyses the reaction L-methionyl-[protein] + [thioredoxin]-disulfide + H2O = L-methionyl-(S)-S-oxide-[protein] + [thioredoxin]-dithiol. It carries out the reaction [thioredoxin]-disulfide + L-methionine + H2O = L-methionine (S)-S-oxide + [thioredoxin]-dithiol. The catalysed reaction is L-methionyl-[protein] + [thioredoxin]-disulfide + H2O = L-methionyl-(R)-S-oxide-[protein] + [thioredoxin]-dithiol. Its function is as follows. Has an important function as a repair enzyme for proteins that have been inactivated by oxidation. Catalyzes the reversible oxidation-reduction of methionine sulfoxide in proteins to methionine. This chain is Peptide methionine sulfoxide reductase MsrA/MsrB 2 (msrAB2), found in Streptococcus pneumoniae serotype 4 (strain ATCC BAA-334 / TIGR4).